Consider the following 282-residue polypeptide: Acetyl-coenzyme A carboxylase carboxyl transferase subunit beta (282 aa).

A CoA carboxyltransferase N-terminal domain is found at 29 to 282; that stretch reads LPINCPSCSA…LSSLLGLHQG (254 aa). Cysteine 33, cysteine 36, cysteine 52, and cysteine 55 together coordinate Zn(2+). Residues 33–55 form a C4-type zinc finger; it reads CPSCSARIAAEALQRNLKVCPKC.

This sequence belongs to the AccD/PCCB family. In terms of assembly, acetyl-CoA carboxylase is a heterohexamer composed of biotin carboxyl carrier protein (AccB), biotin carboxylase (AccC) and two subunits each of ACCase subunit alpha (AccA) and ACCase subunit beta (AccD). Requires Zn(2+) as cofactor.

The protein resides in the cytoplasm. It catalyses the reaction N(6)-carboxybiotinyl-L-lysyl-[protein] + acetyl-CoA = N(6)-biotinyl-L-lysyl-[protein] + malonyl-CoA. Its pathway is lipid metabolism; malonyl-CoA biosynthesis; malonyl-CoA from acetyl-CoA: step 1/1. Component of the acetyl coenzyme A carboxylase (ACC) complex. Biotin carboxylase (BC) catalyzes the carboxylation of biotin on its carrier protein (BCCP) and then the CO(2) group is transferred by the transcarboxylase to acetyl-CoA to form malonyl-CoA. This Syntrophomonas wolfei subsp. wolfei (strain DSM 2245B / Goettingen) protein is Acetyl-coenzyme A carboxylase carboxyl transferase subunit beta.